The following is a 216-amino-acid chain: Large ribosomal subunit protein uL3 (216 aa).

Gln157 is subject to N5-methylglutamine.

Belongs to the universal ribosomal protein uL3 family. In terms of assembly, part of the 50S ribosomal subunit. Forms a cluster with proteins L14 and L19. Post-translationally, methylated by PrmB.

Functionally, one of the primary rRNA binding proteins, it binds directly near the 3'-end of the 23S rRNA, where it nucleates assembly of the 50S subunit. In Xanthomonas campestris pv. campestris (strain 8004), this protein is Large ribosomal subunit protein uL3.